The sequence spans 345 residues: MSIANIDALTRVIDHREIFHDEMLALMRRIMSGEMSPVMIAAFAIGLRVKKETIGEIAAAAQVMREFATPVAVPDKTNLVDLCGTGGDGVHTFNISTASMFVAAAAGARVAKHGGRSVSSSSGSADVLEALGAHINLTPEQVAISLERCGIGFMFAPNHHASMKHAAPVRKELGVRTIFNILGPLTNPALAPNQVMGVFHPDLVGIQVRVLQRLGSSHVLIVHGMNGMDEISLSGETMIGELKAGQISEYVVHPADFGLPVYDTRVLKVANKEESVTCIQRALANEDGPVRDIVLLNAGAALYAADVVTSITDGVRAAREAVASGQALAKLSQYVAVTQSFKTAV.

Residues Gly84, 87-88 (GD), Thr92, 94-97 (NIST), 112-120 (KHGGRSVSS), and Ser124 each bind 5-phospho-alpha-D-ribose 1-diphosphate. An anthranilate-binding site is contributed by Gly84. Ser96 is a binding site for Mg(2+). Arg170 contributes to the anthranilate binding site. 2 residues coordinate Mg(2+): Asp229 and Glu230.

This sequence belongs to the anthranilate phosphoribosyltransferase family. As to quaternary structure, homodimer. The cofactor is Mg(2+).

It carries out the reaction N-(5-phospho-beta-D-ribosyl)anthranilate + diphosphate = 5-phospho-alpha-D-ribose 1-diphosphate + anthranilate. It participates in amino-acid biosynthesis; L-tryptophan biosynthesis; L-tryptophan from chorismate: step 2/5. Catalyzes the transfer of the phosphoribosyl group of 5-phosphorylribose-1-pyrophosphate (PRPP) to anthranilate to yield N-(5'-phosphoribosyl)-anthranilate (PRA). This is Anthranilate phosphoribosyltransferase from Leptothrix cholodnii (strain ATCC 51168 / LMG 8142 / SP-6) (Leptothrix discophora (strain SP-6)).